The following is a 213-amino-acid chain: Glycerol-3-phosphate acyltransferase (213 aa).

5 consecutive transmembrane segments (helical) span residues 3–23, 51–71, 78–98, 115–135, and 140–160; these read ILLA…VVVS, KAAI…VWLA, DVAV…PVFF, AVHP…AFFF, and LAAL…FGTP.

It belongs to the PlsY family. In terms of assembly, probably interacts with PlsX.

The protein localises to the cell inner membrane. The catalysed reaction is an acyl phosphate + sn-glycerol 3-phosphate = a 1-acyl-sn-glycero-3-phosphate + phosphate. It functions in the pathway lipid metabolism; phospholipid metabolism. Catalyzes the transfer of an acyl group from acyl-phosphate (acyl-PO(4)) to glycerol-3-phosphate (G3P) to form lysophosphatidic acid (LPA). This enzyme utilizes acyl-phosphate as fatty acyl donor, but not acyl-CoA or acyl-ACP. In Burkholderia cenocepacia (strain ATCC BAA-245 / DSM 16553 / LMG 16656 / NCTC 13227 / J2315 / CF5610) (Burkholderia cepacia (strain J2315)), this protein is Glycerol-3-phosphate acyltransferase.